A 77-amino-acid polypeptide reads, in one-letter code: Small ribosomal subunit protein bS21 (77 aa).

Residues 38 to 52 show a composition bias toward basic and acidic residues; that stretch reads KPSEKRAREKAEAIR. Residues 38–77 are disordered; the sequence is KPSEKRAREKAEAIRRTRKLARKRAQREGIVSNGRTASVR. Residues 53 to 62 show a composition bias toward basic residues; the sequence is RTRKLARKRA.

This sequence belongs to the bacterial ribosomal protein bS21 family.

This chain is Small ribosomal subunit protein bS21, found in Bartonella bacilliformis (strain ATCC 35685 / KC583 / Herrer 020/F12,63).